We begin with the raw amino-acid sequence, 339 residues long: Ribonucleoside-diphosphate reductase subunit beta (339 aa).

Fe cation-binding residues include Asp-87 and His-121. Tyr-125 is an active-site residue. Residue His-215 participates in Fe cation binding.

The protein belongs to the ribonucleoside diphosphate reductase small chain family. In terms of assembly, tetramer of two alpha and two beta subunits. The cofactor is Fe cation.

It catalyses the reaction a 2'-deoxyribonucleoside 5'-diphosphate + [thioredoxin]-disulfide + H2O = a ribonucleoside 5'-diphosphate + [thioredoxin]-dithiol. Its function is as follows. Provides the precursors necessary for DNA synthesis. Catalyzes the biosynthesis of deoxyribonucleotides from the corresponding ribonucleotides. The chain is Ribonucleoside-diphosphate reductase subunit beta (nrdF) from Mycoplasmoides gallisepticum (strain R(low / passage 15 / clone 2)) (Mycoplasma gallisepticum).